Here is a 479-residue protein sequence, read N- to C-terminus: Dihydrolipoyl dehydrogenase (479 aa).

FAD is bound by residues 41–50, Lys-59, Ala-124, and 153–155; these read EKRGALGGTC and TGS. Cys-50 and Cys-55 are oxidised to a cystine. NAD(+)-binding positions include 190–197, Glu-213, Ile-247, and Gly-284; that span reads GGGVIGLE. Residues Asp-325 and 332-335 contribute to the FAD site; that span reads MLAH. His-458 acts as the Proton acceptor in catalysis.

The protein belongs to the class-I pyridine nucleotide-disulfide oxidoreductase family. In terms of assembly, homodimer. Requires FAD as cofactor.

The enzyme catalyses N(6)-[(R)-dihydrolipoyl]-L-lysyl-[protein] + NAD(+) = N(6)-[(R)-lipoyl]-L-lysyl-[protein] + NADH + H(+). This is Dihydrolipoyl dehydrogenase from Trypanosoma brucei brucei.